The sequence spans 128 residues: Small ribosomal subunit protein eS8 (128 aa).

The segment at 1-41 (MSYYQGNDSRKITGGQKGKNRDKRKYELGSPPTETKISDKD) is disordered.

Belongs to the eukaryotic ribosomal protein eS8 family. In terms of assembly, part of the 30S ribosomal subunit.

The chain is Small ribosomal subunit protein eS8 from Sulfolobus acidocaldarius (strain ATCC 33909 / DSM 639 / JCM 8929 / NBRC 15157 / NCIMB 11770).